The primary structure comprises 247 residues: NH(3)-dependent NAD(+) synthetase (247 aa).

Residue 29 to 36 participates in ATP binding; the sequence is GLSGGVDS. Position 35 (Asp35) interacts with Mg(2+). Arg112 serves as a coordination point for deamido-NAD(+). Thr132 provides a ligand contact to ATP. Glu137 lines the Mg(2+) pocket. Positions 145 and 152 each coordinate deamido-NAD(+). ATP contacts are provided by Lys161 and Ser183. A deamido-NAD(+)-binding site is contributed by 233 to 234; it reads HK.

It belongs to the NAD synthetase family. In terms of assembly, homodimer.

It carries out the reaction deamido-NAD(+) + NH4(+) + ATP = AMP + diphosphate + NAD(+) + H(+). The protein operates within cofactor biosynthesis; NAD(+) biosynthesis; NAD(+) from deamido-NAD(+) (ammonia route): step 1/1. Its function is as follows. Catalyzes the ATP-dependent amidation of deamido-NAD to form NAD. Uses ammonia as a nitrogen source. The polypeptide is NH(3)-dependent NAD(+) synthetase (Archaeoglobus fulgidus (strain ATCC 49558 / DSM 4304 / JCM 9628 / NBRC 100126 / VC-16)).